The sequence spans 302 residues: GTPase Era (302 aa).

The Era-type G domain maps to 8-175; that stretch reads HSGFVAIIGR…LTTLKGQLPE (168 aa). A G1 region spans residues 16-23; sequence GRPNVGKS. 16–23 contacts GTP; the sequence is GRPNVGKS. The segment at 42–46 is G2; sequence QTTRN. The segment at 63 to 66 is G3; it reads DTPG. Residues 63-67 and 125-128 each bind GTP; these read DTPGI and NKID. Residues 125–128 form a G4 region; it reads NKID. The interval 154 to 156 is G5; the sequence is ISA. Residues 206-283 form the KH type-2 domain; that stretch reads TRQEVPHSTA…YLELWVKVQE (78 aa).

This sequence belongs to the TRAFAC class TrmE-Era-EngA-EngB-Septin-like GTPase superfamily. Era GTPase family. As to quaternary structure, monomer.

It localises to the cytoplasm. The protein localises to the cell membrane. Its function is as follows. An essential GTPase that binds both GDP and GTP, with rapid nucleotide exchange. Plays a role in 16S rRNA processing and 30S ribosomal subunit biogenesis and possibly also in cell cycle regulation and energy metabolism. The protein is GTPase Era of Lactiplantibacillus plantarum (strain ATCC BAA-793 / NCIMB 8826 / WCFS1) (Lactobacillus plantarum).